The following is a 192-amino-acid chain: MRRFVLDTSVFTNPHCAVQFGEDPLAGVQTFLHLARRCPAEFYMPLSVYDEFRRMRDLAEMAADFETDVWVRSPRRFSMTIPAEILYEFIHELRGRIDRGLRIAEEHTRQAGAATDMRPELIASLRERYREAMRKGLVDSREDVDAVLLAMELDAELVSADEGMRKLGNRMGVKLLTADYLRQVMENLGAGH.

The protein belongs to the HARP family.

It carries out the reaction Endonucleolytic cleavage of RNA, removing 5'-extranucleotides from tRNA precursor.. Its function is as follows. RNA-free RNase P that catalyzes the removal of the 5'-leader sequence from pre-tRNA to produce the mature 5'-terminus. The chain is RNA-free ribonuclease P from Alkalilimnicola ehrlichii (strain ATCC BAA-1101 / DSM 17681 / MLHE-1).